The following is a 235-amino-acid chain: Octanoyltransferase (235 aa).

Residues K52–N229 form the BPL/LPL catalytic domain. Residues R89–H96, A159–G161, and G172–A174 each bind substrate. C190 functions as the Acyl-thioester intermediate in the catalytic mechanism.

Belongs to the LipB family.

It is found in the cytoplasm. It carries out the reaction octanoyl-[ACP] + L-lysyl-[protein] = N(6)-octanoyl-L-lysyl-[protein] + holo-[ACP] + H(+). Its pathway is protein modification; protein lipoylation via endogenous pathway; protein N(6)-(lipoyl)lysine from octanoyl-[acyl-carrier-protein]: step 1/2. Its function is as follows. Catalyzes the transfer of endogenously produced octanoic acid from octanoyl-acyl-carrier-protein onto the lipoyl domains of lipoate-dependent enzymes. Lipoyl-ACP can also act as a substrate although octanoyl-ACP is likely to be the physiological substrate. The polypeptide is Octanoyltransferase (Tropheryma whipplei (strain Twist) (Whipple's bacillus)).